The primary structure comprises 390 residues: F-box/kelch-repeat protein At4g39753 (390 aa).

The segment covering 1–16 (MVTFWAETAASAATTS) has biased composition (low complexity). Residues 1–33 (MVTFWAETAASAATTSKGEPPSKKRKTNPSPPP) are disordered. In terms of domain architecture, F-box spans 32 to 79 (PPSLLSLPDVLILNCLSRIPKSYYPKLSIVSKTFRDLIISIDLNHARF). Kelch repeat units follow at residues 139–192 (PLLV…VFDR), 193–243 (KIYV…MIQG), 245–286 (FYVR…WYSC), and 288–321 (PNSF…LIET).

This Arabidopsis thaliana (Mouse-ear cress) protein is F-box/kelch-repeat protein At4g39753.